A 172-amino-acid polypeptide reads, in one-letter code: Small ribosomal subunit protein uS5 (172 aa).

Residues 13–76 (LVEKMISVNR…EQARHNMMKI (64 aa)) enclose the S5 DRBM domain.

This sequence belongs to the universal ribosomal protein uS5 family. Part of the 30S ribosomal subunit. Contacts proteins S4 and S8.

Functionally, with S4 and S12 plays an important role in translational accuracy. In terms of biological role, located at the back of the 30S subunit body where it stabilizes the conformation of the head with respect to the body. This Chromobacterium violaceum (strain ATCC 12472 / DSM 30191 / JCM 1249 / CCUG 213 / NBRC 12614 / NCIMB 9131 / NCTC 9757 / MK) protein is Small ribosomal subunit protein uS5.